Consider the following 386-residue polypeptide: Diaminopimelate decarboxylase (386 aa).

Lys49 is modified (N6-(pyridoxal phosphate)lysine). Pyridoxal 5'-phosphate-binding positions include Gly228 and 266–269; that span reads ELGR. Residues Arg269, Arg305, Tyr309, Glu335, and Tyr363 each coordinate substrate. Tyr363 is a binding site for pyridoxal 5'-phosphate.

It belongs to the Orn/Lys/Arg decarboxylase class-II family. LysA subfamily. Homodimer. Pyridoxal 5'-phosphate is required as a cofactor.

It carries out the reaction meso-2,6-diaminopimelate + H(+) = L-lysine + CO2. The protein operates within amino-acid biosynthesis; L-lysine biosynthesis via DAP pathway; L-lysine from DL-2,6-diaminopimelate: step 1/1. In terms of biological role, specifically catalyzes the decarboxylation of meso-diaminopimelate (meso-DAP) to L-lysine. In Bacteroides thetaiotaomicron (strain ATCC 29148 / DSM 2079 / JCM 5827 / CCUG 10774 / NCTC 10582 / VPI-5482 / E50), this protein is Diaminopimelate decarboxylase.